The following is a 138-amino-acid chain: ATP synthase epsilon chain (138 aa).

Belongs to the ATPase epsilon chain family. F-type ATPases have 2 components, CF(1) - the catalytic core - and CF(0) - the membrane proton channel. CF(1) has five subunits: alpha(3), beta(3), gamma(1), delta(1), epsilon(1). CF(0) has three main subunits: a, b and c.

It localises to the cell inner membrane. In terms of biological role, produces ATP from ADP in the presence of a proton gradient across the membrane. The chain is ATP synthase epsilon chain from Polynucleobacter necessarius subsp. necessarius (strain STIR1).